A 362-amino-acid polypeptide reads, in one-letter code: tRNA-specific 2-thiouridylase MnmA (362 aa).

Residues 13-20 (GLSGGVDS) and Met-39 each bind ATP. The tract at residues 99–101 (NPD) is interaction with target base in tRNA. Cys-104 functions as the Nucleophile in the catalytic mechanism. Cysteines 104 and 200 form a disulfide. Gly-128 lines the ATP pocket. The interval 150–152 (KDQ) is interaction with tRNA. Catalysis depends on Cys-200, which acts as the Cysteine persulfide intermediate.

This sequence belongs to the MnmA/TRMU family.

It is found in the cytoplasm. It catalyses the reaction S-sulfanyl-L-cysteinyl-[protein] + uridine(34) in tRNA + AH2 + ATP = 2-thiouridine(34) in tRNA + L-cysteinyl-[protein] + A + AMP + diphosphate + H(+). In terms of biological role, catalyzes the 2-thiolation of uridine at the wobble position (U34) of tRNA, leading to the formation of s(2)U34. This is tRNA-specific 2-thiouridylase MnmA from Coxiella burnetii (strain Dugway 5J108-111).